The primary structure comprises 312 residues: tRNA dimethylallyltransferase (312 aa).

14–21 (GPTASGKS) contacts ATP. Residue 16–21 (TASGKS) coordinates substrate. Interaction with substrate tRNA stretches follow at residues 39 to 42 (DSSL) and 163 to 167 (QRLQR).

This sequence belongs to the IPP transferase family. Monomer. It depends on Mg(2+) as a cofactor.

The enzyme catalyses adenosine(37) in tRNA + dimethylallyl diphosphate = N(6)-dimethylallyladenosine(37) in tRNA + diphosphate. Catalyzes the transfer of a dimethylallyl group onto the adenine at position 37 in tRNAs that read codons beginning with uridine, leading to the formation of N6-(dimethylallyl)adenosine (i(6)A). The polypeptide is tRNA dimethylallyltransferase (Methylococcus capsulatus (strain ATCC 33009 / NCIMB 11132 / Bath)).